The sequence spans 405 residues: Argininosuccinate synthase (405 aa).

Residues 12-20 (AYSGGLDTS) and A40 contribute to the ATP site. Y92 and S97 together coordinate L-citrulline. G122 contributes to the ATP binding site. The L-aspartate site is built by T124, N128, and D129. N128 serves as a coordination point for L-citrulline. L-citrulline-binding residues include R132, S181, S190, E266, and Y278.

It belongs to the argininosuccinate synthase family. Type 1 subfamily. As to quaternary structure, homotetramer.

It is found in the cytoplasm. The enzyme catalyses L-citrulline + L-aspartate + ATP = 2-(N(omega)-L-arginino)succinate + AMP + diphosphate + H(+). It participates in amino-acid biosynthesis; L-arginine biosynthesis; L-arginine from L-ornithine and carbamoyl phosphate: step 2/3. The chain is Argininosuccinate synthase from Edwardsiella ictaluri (strain 93-146).